The following is a 331-amino-acid chain: Phosphate acyltransferase (331 aa).

Belongs to the PlsX family. In terms of assembly, homodimer. Probably interacts with PlsY.

Its subcellular location is the cytoplasm. The catalysed reaction is a fatty acyl-[ACP] + phosphate = an acyl phosphate + holo-[ACP]. It participates in lipid metabolism; phospholipid metabolism. Functionally, catalyzes the reversible formation of acyl-phosphate (acyl-PO(4)) from acyl-[acyl-carrier-protein] (acyl-ACP). This enzyme utilizes acyl-ACP as fatty acyl donor, but not acyl-CoA. The polypeptide is Phosphate acyltransferase (Malacoplasma penetrans (strain HF-2) (Mycoplasma penetrans)).